We begin with the raw amino-acid sequence, 352 residues long: Selenide, water dikinase (352 aa).

Cys23 is a catalytic residue. ATP is bound by residues Lys26 and 54–56 (SRD). Residue Asp57 coordinates Mg(2+). Residues Asp74, Asp97, and 145–147 (GHS) each bind ATP. Asp97 serves as a coordination point for Mg(2+). Asp233 is a binding site for Mg(2+).

Belongs to the selenophosphate synthase 1 family. Class I subfamily. Homodimer. Mg(2+) is required as a cofactor.

The enzyme catalyses hydrogenselenide + ATP + H2O = selenophosphate + AMP + phosphate + 2 H(+). Functionally, synthesizes selenophosphate from selenide and ATP. The sequence is that of Selenide, water dikinase from Shewanella baltica (strain OS185).